Consider the following 490-residue polypeptide: Sushi domain-containing protein 4 (490 aa).

Residues 1–20 (MYHGMNPSNGDGFLEQQLQQ) form a disordered region. A signal peptide spans 1–41 (MYHGMNPSNGDGFLEQQLQQQQPQSPQRLLAVILWFQLALC). At 42–319 (FGPAQLTGGF…PSTHETLLTT (278 aa)) the chain is on the extracellular side. 4 Sushi domains span residues 55–119 (NVCA…VCIQ), 120–179 (EDCR…ICQG), 178–239 (QGCL…RCLA), and 241–304 (EVCP…YCIK). Disulfide bonds link Cys-57–Cys-99, Cys-85–Cys-117, Cys-122–Cys-165, Cys-147–Cys-177, Cys-180–Cys-224, Cys-210–Cys-237, Cys-243–Cys-289, and Cys-274–Cys-302. Asn-104 and Asn-134 each carry an N-linked (GlcNAc...) asparagine glycan. N-linked (GlcNAc...) asparagine glycosylation is present at Asn-192. Residues 320–340 (WKIVAFTATSVLLVLLLVILA) traverse the membrane as a helical segment. Residues 341-490 (RMFQTKFKAH…DEIPLMEEDP (150 aa)) lie on the Cytoplasmic side of the membrane. The tract at residues 394–490 (YPASVGQGCP…DEIPLMEEDP (97 aa)) is disordered. Polar residues-rich tracts occupy residues 430 to 444 (CDST…QSLY) and 461 to 475 (DTIS…STSP). A compositionally biased stretch (acidic residues) spans 479 to 490 (IADEIPLMEEDP).

In terms of tissue distribution, high expression in brain and eye, with weaker expression in spinal cord and testis. Detected in white matter of brain and in the outer segments of photoreceptors.

The protein resides in the membrane. In terms of biological role, acts as a complement inhibitor by disrupting the formation of the classical C3 convertase. Isoform 3 inhibits the classical complement pathway, while membrane-bound isoform 1 inhibits deposition of C3b via both the classical and alternative complement pathways. This is Sushi domain-containing protein 4 (Susd4) from Mus musculus (Mouse).